An 88-amino-acid polypeptide reads, in one-letter code: Conotoxin Gm9.1 (88 aa).

The N-terminal stretch at 1 to 27 (MHLSLARSAVLMLLLLFALGNFVVVQS) is a signal peptide. Positions 28–58 (GLITRDVDNGQLTDNRRNLQTEWNPLSLFMS) are excised as a propeptide. Disulfide bonds link C62–C76, C66–C78, and C72–C83. The residue at position 87 (N87) is an Asparagine amide.

It belongs to the conotoxin P superfamily. Expressed by the venom duct.

The protein resides in the secreted. Neurotoxin. In vivo, elicits 'spasmodic' symptomatology. This chain is Conotoxin Gm9.1, found in Conus gloriamaris (Glory-of-the-Sea cone).